A 201-amino-acid polypeptide reads, in one-letter code: Peptidyl-tRNA hydrolase (201 aa).

TRNA is bound at residue Y14. H19 acts as the Proton acceptor in catalysis. Residues F64, N66, and N112 each coordinate tRNA.

The protein belongs to the PTH family. Monomer.

It is found in the cytoplasm. The enzyme catalyses an N-acyl-L-alpha-aminoacyl-tRNA + H2O = an N-acyl-L-amino acid + a tRNA + H(+). Functionally, hydrolyzes ribosome-free peptidyl-tRNAs (with 1 or more amino acids incorporated), which drop off the ribosome during protein synthesis, or as a result of ribosome stalling. Its function is as follows. Catalyzes the release of premature peptidyl moieties from peptidyl-tRNA molecules trapped in stalled 50S ribosomal subunits, and thus maintains levels of free tRNAs and 50S ribosomes. In Rhodopseudomonas palustris (strain BisA53), this protein is Peptidyl-tRNA hydrolase.